Reading from the N-terminus, the 182-residue chain is ATP synthase subunit b, chloroplastic (182 aa).

Residues 36–56 traverse the membrane as a helical segment; that stretch reads ILLLLLGLMYVLKEFLGSILV.

Belongs to the ATPase B chain family. F-type ATPases have 2 components, F(1) - the catalytic core - and F(0) - the membrane proton channel. F(1) has five subunits: alpha(3), beta(3), gamma(1), delta(1), epsilon(1). F(0) has four main subunits: a(1), b(1), b'(1) and c(10-14). The alpha and beta chains form an alternating ring which encloses part of the gamma chain. F(1) is attached to F(0) by a central stalk formed by the gamma and epsilon chains, while a peripheral stalk is formed by the delta, b and b' chains.

The protein resides in the plastid. It localises to the chloroplast thylakoid membrane. Its function is as follows. F(1)F(0) ATP synthase produces ATP from ADP in the presence of a proton or sodium gradient. F-type ATPases consist of two structural domains, F(1) containing the extramembraneous catalytic core and F(0) containing the membrane proton channel, linked together by a central stalk and a peripheral stalk. During catalysis, ATP synthesis in the catalytic domain of F(1) is coupled via a rotary mechanism of the central stalk subunits to proton translocation. Component of the F(0) channel, it forms part of the peripheral stalk, linking F(1) to F(0). This Gracilaria tenuistipitata var. liui (Red alga) protein is ATP synthase subunit b, chloroplastic.